The following is a 198-amino-acid chain: Ribonuclease HII (198 aa).

One can recognise an RNase H type-2 domain in the interval 10–198; the sequence is QLVAGVDEVG…PVKRALGLAS (189 aa). A divalent metal cation-binding residues include Asp16, Glu17, and Asp108.

It belongs to the RNase HII family. Mn(2+) serves as cofactor. Requires Mg(2+) as cofactor.

It localises to the cytoplasm. It catalyses the reaction Endonucleolytic cleavage to 5'-phosphomonoester.. Functionally, endonuclease that specifically degrades the RNA of RNA-DNA hybrids. The chain is Ribonuclease HII from Shigella boydii serotype 18 (strain CDC 3083-94 / BS512).